Consider the following 58-residue polypeptide: Potassium channel toxin alpha-KTx 9.9 (58 aa).

A signal peptide spans 1-21 (KKTSRLFTLVLIVLAMNVMMA). Positions 22-30 (IISDPVVEA) are excised as a propeptide. Disulfide bonds link C33–C49, C36–C54, and C40–C56.

This sequence belongs to the short scorpion toxin superfamily. Potassium channel inhibitor family. Alpha-KTx 09 subfamily. In terms of tissue distribution, expressed by the venom gland.

It is found in the secreted. Potassium channel inhibitor. This chain is Potassium channel toxin alpha-KTx 9.9, found in Buthus israelis (Israeli scorpion).